The sequence spans 507 residues: MINVAILSAIRRWHFRDGASIREIARRSGLSRNTVRKYLQSKVVEPQYPARDSVGKLSPFEPKLRQWLSTEHKKTKKLRRNLRSMYRDLVALGFTGSYDRVCAFARQWKDSEQFKAQTSGKGCFIPLRFACGEAFQFDWSEDFARIAGKQVKLQIAQFKLAHSRAFVLRAYYQQKHEMLFDAHWHAFQIFGGIPKRGIYDNMKTAVDSVGRGKERRVNQRFTAMVSHYLFDAQFCNPASGWEKGQIEKNVQDSRQRLWQGAPDFQSLADLNVWLEHRCKALWSELRHPELDQTVQEAFADEQGELMALPNAFDAFVEQTKRVTSTCLVHHEGNRYSVPASYANRAISLRIYADKLVMAAEGQHIAEHPRLFGSGHARRGHTQYDWHHYLSVLQKKPGALRNGAPFAELPPAFKKLQSILLQRPGGDRDMVEILALVLHHDEGAVLSAVELALECGKPSKEHVLNLLGRLTEEPPPKPIPIPKGLRLTLEPQANVNRYDSLRRAHDAA.

An HTH IS21-type domain is found at I6 to L68. A DNA-binding region (H-T-H motif) is located at residues A19–Q40. An Integrase catalytic domain is found at G122–Q302.

The protein belongs to the transposase IS21/IS408/IS1162 family.

Functionally, required for the transposition of the insertion element. The sequence is that of Transposase for insertion sequences IS1326/IS1353 (istA) from Pseudomonas aeruginosa.